Reading from the N-terminus, the 330-residue chain is MQNFIEQIQKCENLNDLEAIRISVLGKKGILTEGFTKLKELEDEAKKEFAAKLNAQKEIFNEAYLAKFKDLENLALEERMKQDALNFNYFDESITTGALHPVMSTMDKIIEYFIALNFSIEKGPLIEDDFHNFEALNLPKSHPARDMQDTFYFDDKRLLRTQTSPVQIRTMLAQKPPIRMIAPGAVFRRDFDITHTPMFHQVEGLVVEEGQKVSFANLKSVLEDFLRYMFGDVKVRFRPSFFPFTEPSAEVDISCVFCKGKGCRVCKHTGWLEVLGCGIVDPNVYNFVGYENVSGYAFGLGVERFAMLLHQIPDLRSLFEGDLRLLEQFR.

Residue glutamate 246 participates in Mg(2+) binding.

It belongs to the class-II aminoacyl-tRNA synthetase family. Phe-tRNA synthetase alpha subunit type 1 subfamily. In terms of assembly, tetramer of two alpha and two beta subunits. Requires Mg(2+) as cofactor.

The protein localises to the cytoplasm. The catalysed reaction is tRNA(Phe) + L-phenylalanine + ATP = L-phenylalanyl-tRNA(Phe) + AMP + diphosphate + H(+). The protein is Phenylalanine--tRNA ligase alpha subunit of Campylobacter jejuni subsp. jejuni serotype O:6 (strain 81116 / NCTC 11828).